A 359-amino-acid chain; its full sequence is Phospho-N-acetylmuramoyl-pentapeptide-transferase (359 aa).

The next 10 membrane-spanning stretches (helical) occupy residues 26–46 (TIYGGLTAFLICFLLGPWVIN), 73–93 (TMGGILILFSLGVSTLLWADL), 98–118 (ILITLLSMLLFGAIGFIDDYL), 134–154 (FLVQIMAGLVISYLVYLCPDF), 166–186 (FTPDLGIWYIPFATLVIVGTS), 197–217 (GLAIGPIIIAGVTYMIFAYVA), 234–254 (CGEITIVCGILAGAGLGFLWF), 261–281 (VFMGDTGSIPLGAILGTIAVI), 286–306 (ILLLVVGGLFVIEALSVIIQV), and 338–358 (IVRFWIIAITLALISLSTLKI).

This sequence belongs to the glycosyltransferase 4 family. MraY subfamily. Mg(2+) serves as cofactor.

It localises to the cell inner membrane. The catalysed reaction is UDP-N-acetyl-alpha-D-muramoyl-L-alanyl-gamma-D-glutamyl-meso-2,6-diaminopimeloyl-D-alanyl-D-alanine + di-trans,octa-cis-undecaprenyl phosphate = di-trans,octa-cis-undecaprenyl diphospho-N-acetyl-alpha-D-muramoyl-L-alanyl-D-glutamyl-meso-2,6-diaminopimeloyl-D-alanyl-D-alanine + UMP. It participates in cell wall biogenesis; peptidoglycan biosynthesis. In terms of biological role, catalyzes the initial step of the lipid cycle reactions in the biosynthesis of the cell wall peptidoglycan: transfers peptidoglycan precursor phospho-MurNAc-pentapeptide from UDP-MurNAc-pentapeptide onto the lipid carrier undecaprenyl phosphate, yielding undecaprenyl-pyrophosphoryl-MurNAc-pentapeptide, known as lipid I. This Desulforapulum autotrophicum (strain ATCC 43914 / DSM 3382 / VKM B-1955 / HRM2) (Desulfobacterium autotrophicum) protein is Phospho-N-acetylmuramoyl-pentapeptide-transferase.